We begin with the raw amino-acid sequence, 312 residues long: Cytochrome c biogenesis protein CcsA (312 aa).

The next 8 helical transmembrane spans lie at 9 to 29 (ILTH…LITF), 44 to 64 (GIIV…ISSG), 71 to 91 (LYES…IPYF), 111 to 131 (GFAT…VPAL), 143 to 163 (MILG…LLVI), 216 to 236 (VISL…VWAN), 251 to 271 (WAFI…NINL), and 277 to 297 (AIIA…VNLL).

Belongs to the CcmF/CycK/Ccl1/NrfE/CcsA family. In terms of assembly, may interact with Ccs1.

It localises to the plastid. The protein localises to the chloroplast thylakoid membrane. Its function is as follows. Required during biogenesis of c-type cytochromes (cytochrome c6 and cytochrome f) at the step of heme attachment. In Atropa belladonna (Belladonna), this protein is Cytochrome c biogenesis protein CcsA.